The chain runs to 694 residues: Ribonuclease R (694 aa).

The RNB domain occupies 204 to 525 (RKDLRDLLCF…IVHRLLFHPL (322 aa)). Positions 571-648 (ATLYKAFIIT…LTQSIEWTLV (78 aa)) constitute an S1 motif domain. The interval 652 to 694 (TKAKAKRTSKKKKTESVTTKEKKKSPAKKKKGATKTKKGSGKN) is disordered. Composition is skewed to basic residues over residues 654-664 (AKAKRTSKKKK) and 672-694 (EKKK…SGKN).

This sequence belongs to the RNR ribonuclease family. RNase R subfamily.

It is found in the cytoplasm. It carries out the reaction Exonucleolytic cleavage in the 3'- to 5'-direction to yield nucleoside 5'-phosphates.. Its function is as follows. 3'-5' exoribonuclease that releases 5'-nucleoside monophosphates and is involved in maturation of structured RNAs. The chain is Ribonuclease R from Chlamydia trachomatis serovar D (strain ATCC VR-885 / DSM 19411 / UW-3/Cx).